Reading from the N-terminus, the 597-residue chain is MSETTGLPLKHLQGSPPGTPVNTNNESNEASPDDGCRLPDTVTEAEASSDNHGSVLGDNNRNVEVAVGASDNATKQKVYHTGWRLHALTSALCLSLLLSTLETTIVSTALVSIVDALHGFNMAGWIVTSYLVTYTGFLIIYSKLSDIFGCKLMLLLAITIFTVFSMACGASDSMVPLIVFRAFQGMGGSGIYSLSTIMVPLMVPPEKYATYISIMSSTFILSSVLGPILGGAITDHTTWRWVFYFNGPGGALAAVLLAFSVPFNFPYGESDRFFHSLASKQMWKRVDFVGMTVSLAASILIIFALEQGGVAYPWGSGAIVSTFVLSGVLWIAFIAWERLLSKRDGVREPMFPWSLVHNRFVMGLLLNGFFTGFPFMAALINIPQRFQTVNMTSAINAGIRTLPLLLLSPLATAINGILVSKLRVPPLYTLFLGGSLQTIGVGLYSSLKSSTSIASAQYGYEAIMGLGFGFNLSTILMMVPLVVTEKDLAVTMGSVTQIRVLGGTIGLAVCSALLINHIKREAVKFLTAEQVAQILLSSENIGMLSIETQSRTRVLYADAYSEQMRVMLYFSIASILSLVLLVERQPRKAPAKPERAG.

The disordered stretch occupies residues 1-55 (MSETTGLPLKHLQGSPPGTPVNTNNESNEASPDDGCRLPDTVTEAEASSDNHGSV). Polar residues-rich tracts occupy residues 20-30 (PVNTNNESNEA) and 46-55 (EASSDNHGSV). An N-linked (GlcNAc...) asparagine glycan is attached at Asn25. The N-linked (GlcNAc...) asparagine glycan is linked to Asn72. 9 consecutive transmembrane segments (helical) span residues 94-114 (LSLL…VSIV), 120-140 (FNMA…FLII), 147-167 (IFGC…FSMA), 183-203 (FQGM…PLMV), 214-234 (IMSS…GAIT), 241-261 (WVFY…AFSV), 286-306 (VDFV…FALE), 316-336 (SGAI…FIAW), and 360-380 (FVMG…AALI). A glycan (N-linked (GlcNAc...) asparagine) is linked at Asn390. A run of 5 helical transmembrane segments spans residues 402–422 (LPLL…VSKL), 424–444 (VPPL…VGLY), 463–483 (IMGL…PLVV), 498–518 (IRVL…INHI), and 562–582 (EQMR…VLLV).

This sequence belongs to the major facilitator superfamily. TCR/Tet family.

It localises to the membrane. It participates in secondary metabolite biosynthesis. MFS-type transporter; part of the gene cluster that mediates the biosynthesis of the gamma-pyrones fusapyrone (FPY) and deoxyfusapyrone (dFPY). This Fusarium mangiferae (Mango malformation disease fungus) protein is MFS-type transporter FPY5.